We begin with the raw amino-acid sequence, 1025 residues long: Putative calcium-transporting ATPase 11, plasma membrane-type (1025 aa).

The Cytoplasmic portion of the chain corresponds to 1-157 (MSNLLKDFEV…NRYTEKPARS (157 aa)). The interaction with calmodulin stretch occupies residues 19–30 (ARQRWRSSVGLV). The chain crosses the membrane as a helical span at residues 158–178 (FLTFVWEALQDITLIILMVCA). Residues 179 to 196 (VVSIGVGVATEGFPKGMY) lie on the Lumenal side of the membrane. A helical transmembrane segment spans residues 197–217 (DGTGILLSIILVVMVTAISDY). At 218 to 345 (KQSLQFRDLD…EDETPLQVKL (128 aa)) the chain is on the cytoplasmic side. Residues 346-365 (NGVATIIGKIGLGFAVLTFV) traverse the membrane as a helical segment. Residues 366 to 395 (VLCIRFVVEKATAGSITEWSSEDALTLLDY) are Lumenal-facing. A helical membrane pass occupies residues 396–413 (FAIAVTIIVVAVPEGLPL). At 414 to 801 (AVTLSLAFAM…KWGRAVYINI (388 aa)) the chain is on the cytoplasmic side. The 4-aspartylphosphate intermediate role is filled by Asp451. Residues Asp746 and Asp750 each coordinate Mg(2+). A helical membrane pass occupies residues 802-820 (QKFVQFQLTVNVVALIINF). Topologically, residues 821-831 (VSACITGSAPL) are lumenal. The chain crosses the membrane as a helical span at residues 832–852 (TAVQLLWVNMIMDTLGALALA). Over 853-872 (TEPPNEGLMKRQPIGRTASF) the chain is Cytoplasmic. A helical transmembrane segment spans residues 873-895 (ITRAMWRNIIGQSIYQLIVLGIL). Residues 896 to 907 (NFAGKQILNLNG) lie on the Lumenal side of the membrane. A helical transmembrane segment spans residues 908 to 929 (PDSTIVLNTIIFNSFVFCQVFN). The Cytoplasmic portion of the chain corresponds to 930-947 (EVNSREIEKINVFEGMFK). The helical transmembrane segment at 948–969 (SWVFVAVMTATVGFQVIIVEFL) threads the bilayer. Over 970 to 979 (GAFASTVPLS) the chain is Lumenal. A helical membrane pass occupies residues 980 to 1001 (WQHWLLCILIGSVSMILAVGLK). The Cytoplasmic portion of the chain corresponds to 1002–1025 (CIPVESNRHHDGYELLPSGPSDSA).

This sequence belongs to the cation transport ATPase (P-type) (TC 3.A.3) family. Type IIB subfamily.

The protein resides in the membrane. The catalysed reaction is Ca(2+)(in) + ATP + H2O = Ca(2+)(out) + ADP + phosphate + H(+). Its activity is regulated as follows. Activated by calmodulin. This magnesium-dependent enzyme catalyzes the hydrolysis of ATP coupled with the translocation of calcium from the cytosol out of the cell or into organelles. In Arabidopsis thaliana (Mouse-ear cress), this protein is Putative calcium-transporting ATPase 11, plasma membrane-type (ACA11).